The chain runs to 628 residues: MSSYSPLVPPAAGFDADGRFRSVAYGDVYHSLSGALGQAEHVFLRGNGLPQRWRGRQAFTVCETGFGLGLNFLALWDAWRNDPARPRCLHMVSIEAHPFARDALRDWLRQLAPDILQGLAGQLADQWPACLPGLHRLEFEGGAVTLTLAFGAASALAPHLRARVDAYFLDGFAPDRNPELWQPALMRDLARMAAPDATLATWACAGSVRQALRDAGFRVRKQPGYGGKWHMTVGVRESAQPEAPADAWALARAADGEGQDEVVVVGGGLAGAGIAQALALRGRPVCVIDAAGPASAHAGHVAAALTPVIARDDNPRARLSRAGSQRALARWAGLRPGAAPRRCGTLQLERDAGRSAALAETLQQLQFPADWVRAVDRDEAAGLAGVPLARGGVFFADGLLVQPAALIPALLGMPGVRRVAGCAAVLRRVAHGWQVLDDAGQLLGQGATVVLANAFGAQALLRDSGLLDPLPRVAQMHALAGEITLLPGQGLGGGPRCIVGGEGYLLPPVDGWCVAGSTYEHGAATARVGPAGQQTNLGKAAGLLGGLPAAWAALAPGQLPGWAGWRAVLPGRLPAVGPLGHAPGVWLAAGYASRGLSWSALAGDLIAACLHGEPLPLPADLLAAVAPR.

Positions 1–237 (MSSYSPLVPP…KWHMTVGVRE (237 aa)) are tRNA (mnm(5)s(2)U34)-methyltransferase. An FAD-dependent cmnm(5)s(2)U34 oxidoreductase region spans residues 265-628 (VGGGLAGAGI…ADLLAAVAPR (364 aa)).

It in the N-terminal section; belongs to the methyltransferase superfamily. tRNA (mnm(5)s(2)U34)-methyltransferase family. This sequence in the C-terminal section; belongs to the DAO family. FAD is required as a cofactor.

It localises to the cytoplasm. The catalysed reaction is 5-aminomethyl-2-thiouridine(34) in tRNA + S-adenosyl-L-methionine = 5-methylaminomethyl-2-thiouridine(34) in tRNA + S-adenosyl-L-homocysteine + H(+). Its function is as follows. Catalyzes the last two steps in the biosynthesis of 5-methylaminomethyl-2-thiouridine (mnm(5)s(2)U) at the wobble position (U34) in tRNA. Catalyzes the FAD-dependent demodification of cmnm(5)s(2)U34 to nm(5)s(2)U34, followed by the transfer of a methyl group from S-adenosyl-L-methionine to nm(5)s(2)U34, to form mnm(5)s(2)U34. This chain is tRNA 5-methylaminomethyl-2-thiouridine biosynthesis bifunctional protein MnmC, found in Bordetella petrii (strain ATCC BAA-461 / DSM 12804 / CCUG 43448).